We begin with the raw amino-acid sequence, 316 residues long: Homoserine kinase (316 aa).

97 to 107 (PPARGLGSSAS) is an ATP binding site.

Belongs to the GHMP kinase family. Homoserine kinase subfamily.

The protein localises to the cytoplasm. The enzyme catalyses L-homoserine + ATP = O-phospho-L-homoserine + ADP + H(+). The protein operates within amino-acid biosynthesis; L-threonine biosynthesis; L-threonine from L-aspartate: step 4/5. Functionally, catalyzes the ATP-dependent phosphorylation of L-homoserine to L-homoserine phosphate. This is Homoserine kinase from Prochlorococcus marinus (strain MIT 9303).